Reading from the N-terminus, the 198-residue chain is Recombination protein RecR (198 aa).

The C4-type zinc finger occupies 59-74; it reads CSLCCNYTDHDPCPIC. A Toprim domain is found at 82–175; the sequence is TLLCIVEQPR…KVTRIAHGLP (94 aa).

Belongs to the RecR family.

In terms of biological role, may play a role in DNA repair. It seems to be involved in an RecBC-independent recombinational process of DNA repair. It may act with RecF and RecO. The protein is Recombination protein RecR of Desulfitobacterium hafniense (strain Y51).